A 323-amino-acid chain; its full sequence is MAESSEPPVVLLHRPPSLTFMDEILTREFRTLITDTSSSESLPSFFPRHASSARAFVISGRLPVTDELLSHLPSLQILVCTSVGIDHIDLAACKRRGIVITNAGNAFSDDVADCAVGLLISVLRRIPAADRYVRSGNWAKFGDFQLGSKVSGKRVGIVGLGSIGSFVAKRLESFGCVISYNSRSQKQSSPYRYYSDILSLAENNDVLVLCCSLTDETHHIVNREVMELLGKDGVVINVGRGKLIDEKEMVKCLVDGVIGGAGLDVFENEPAVPQELFGLDNVVLSPHFAVATPGSLDNVAQIALANLKAFFSNRPLLSPVQLD.

Residues 160–163, 182–184, and 238–240 contribute to the NADP(+) site; these read LGSI, SRS, and VGR. Catalysis depends on residues arginine 240 and glutamate 269. Catalysis depends on histidine 287, which acts as the Proton donor. Position 287 to 289 (287 to 289) interacts with NADP(+); the sequence is HFA.

This sequence belongs to the D-isomer specific 2-hydroxyacid dehydrogenase family. GyaR subfamily. In terms of assembly, homodimer.

The enzyme catalyses glycolate + NADP(+) = glyoxylate + NADPH + H(+). The catalysed reaction is (R)-glycerate + NADP(+) = 3-hydroxypyruvate + NADPH + H(+). Inhibited by oxalate. In terms of biological role, catalyzes the NADPH-dependent reduction of glyoxylate and hydroxypyruvate (HP) into glycolate and glycerate. Mostly active in the presence of NADPH and glyoxylate. The sequence is that of Glyoxylate/hydroxypyruvate reductase HPR3 (HPR3) from Arabidopsis thaliana (Mouse-ear cress).